We begin with the raw amino-acid sequence, 285 residues long: MGMAMSENLLRYGNVAKPLVLYNRTREKAEAHSSRLGDCEVANSLPAAVSVSDIIWLCLQDQTAVEETFQEILPAEIRSKLFVDSSTTNPETADSIARRLSDRGAFFVALPVMGGPPLALSRSLTCIASGDRESVDRIRPYIEGVGEKPGAALLLKLLGNFLIMATIETVAEAHAFAEKCGIDTTNMDKLLRAVFPLPPHALYNRQMVTGECFSGKPLVEVSKALQLTGHVMEMAKKHGASVKIYEIARQHLEIVQENAGPDADITAIYGAVRMESGLPFSTITE.

Thr87 is an NAD(+) binding site. Lys156 is an active-site residue.

Belongs to the HIBADH-related family. NP60 subfamily.

The protein operates within secondary metabolite biosynthesis. Its function is as follows. Nonribosomal peptide synthetase that mediates the biosynthesis of usterphenyllins and uscandidusins, p-terphenyl derivatives. Within the pathway, ucdB alone catalyzes both reduction and dehydration of atromentin to form a terphenyl triol intermediate. The pathway begin with the biosynthesis of 4-hydroxyphenylpyruvate (HPPA) from L-tyrosine, possibly by the aminotransferase ucdG. The nonribosomal peptide synthetase ucdA then condenses two HPPA units to produce atromentin. The key step in this pathway is the reduction and dehydration of atromentin to form a terphenyl triol intermediate, performed by the NAD-dependent dehydrogenase ucdB. Further O-methylation by the methyltransferase ucdC forms terphenyllin carrying two methoxy moieties at C-9 and C-12, and subsequent dihydroxylation at C-3 of ring A and C-15 of ring C by the flavin-dependent oxygenase ucdD leads to 3,15-dihydroxyterphenyllin. Prenylation by ucdE at position C-5 of ring A forms usterphenyllin B, and is followed by a second prenylation at position C-14 of ring C to form usterphenyllin A. The following furan ring formation that leads to uscandidusins A and B was proven to be an unexpected spontaneous non-enzymatic reaction. The chain is NADH-dependent oxidoreductase ucdB from Aspergillus ustus.